Here is a 240-residue protein sequence, read N- to C-terminus: UDP-2,3-diacylglucosamine hydrolase (240 aa).

Mn(2+) contacts are provided by Asp-8, His-10, Asp-41, Asn-79, and His-114. Residue Asn-79–Arg-80 participates in substrate binding. 5 residues coordinate substrate: Asp-122, Ser-160, Asn-164, Lys-167, and His-195. Mn(2+)-binding residues include His-195 and His-197.

It belongs to the LpxH family. The cofactor is Mn(2+).

It localises to the cell inner membrane. The enzyme catalyses UDP-2-N,3-O-bis[(3R)-3-hydroxytetradecanoyl]-alpha-D-glucosamine + H2O = 2-N,3-O-bis[(3R)-3-hydroxytetradecanoyl]-alpha-D-glucosaminyl 1-phosphate + UMP + 2 H(+). Its pathway is glycolipid biosynthesis; lipid IV(A) biosynthesis; lipid IV(A) from (3R)-3-hydroxytetradecanoyl-[acyl-carrier-protein] and UDP-N-acetyl-alpha-D-glucosamine: step 4/6. Hydrolyzes the pyrophosphate bond of UDP-2,3-diacylglucosamine to yield 2,3-diacylglucosamine 1-phosphate (lipid X) and UMP by catalyzing the attack of water at the alpha-P atom. Involved in the biosynthesis of lipid A, a phosphorylated glycolipid that anchors the lipopolysaccharide to the outer membrane of the cell. The chain is UDP-2,3-diacylglucosamine hydrolase from Salmonella paratyphi C (strain RKS4594).